We begin with the raw amino-acid sequence, 83 residues long: Small ribosomal subunit protein bS20 (83 aa).

The segment at 1-25 (MPNIKSAIKRVNTTHTAEERNISQK) is disordered. Positions 16 to 25 (TAEERNISQK) are enriched in basic and acidic residues.

Belongs to the bacterial ribosomal protein bS20 family.

Binds directly to 16S ribosomal RNA. This chain is Small ribosomal subunit protein bS20, found in Staphylococcus saprophyticus subsp. saprophyticus (strain ATCC 15305 / DSM 20229 / NCIMB 8711 / NCTC 7292 / S-41).